The sequence spans 3390 residues: MNNQRKKTGKPSINMLKRVRNRVSTGSQLAKRFSRGLLNGQGPMKLVMAFIAFLRFLAIPPTAGVLARWGTFKKSGAIKVLKGFKKEISNMLSIINKRKKTSLCLMMMLPATLAFHLTSRDGEPRMIVGKNERGKSLLFKTASGINMCTLIAMDLGEMCDDTVTYKCPHITEVEPEDIDCWCNLTSTWVTYGTCNQAGEHRRDKRSVALAPHVGMGLDTRTQTWMSAEGAWRQVEKVETWALRHPGFTILALFLAHYIGTSLTQKVVIFILLMLVTPSMTMRCVGVGNRDFVEGLSGATWVDVVLEHGGCVTTMAKNKPTLDIELQKTEATQLATLRKLCIEGKITNITTDSRCPTQGEAILPEEQDQNYVCKHTYVDRGWGNGCGLFGKGSLVTCAKFQCLESIEGKVVQHENLKYTVIITVHTGDQHQVGNETQGVTAEITSQASTAEAILPEYGTLGLECSPRTGLDFNEMILLTMKNKAWMVHRQWFFDLPLPWTSGATTKTPTWNRKELLVTFKNAHAKKQEVVVLGSQEGAMHTALTGATEIQTLGGTSIFAGHLKCRLKMDKLELKGMSYAMCLNTFVLKKEVSETQHGTILIKVEYKGEDAPCKIPFSTEDGQGKAHNGRLITANPVVTKKEEPVNIEAEPPFGESNIVIGIGDKALKINWYRKGSSIGKMFEATARGARRMAILGDTAWDFGSVGGVLNSLGKMVHQIFGSAYTALFSGVSWIMKIGIGVLLTWIGLNSKNTSMSFSCIAIGIITLYLGVVVQADMGCVINWKGKELKCGSGIFVTNEVHTWTEQYKFQADSPKRLATAIAGAWENGVCGIRSTTRMENLLWKQIANELNYILWENNIKLTVVVGDITGVLEQGKRTLTPQPMELKYSWKTWGKAKIVTAETQNSSFIIDGPSTPECPSASRAWNVWEVEDYGFGVFTTNIWLKLREVYTQLCDHRLMSAAVKDERAVHADMGYWIESQKNGSWKLEKASLIEVKTCTWPKSHTLWSNGVLESDMIIPKSLAGPISQHNHRPGYHTQTAGPWHLGKLELDFNYCEGTTVVISENCGTRGPSLRTTTVSGKLIHEWCCRSCTLPPLRYMGEDGCWYGMEIRPINEKEENMVKSLASAGSGKVDNFTMGVLCLAILFEEVMRGKFGKKHMIAGVLFTFVLLLSGQITWRDMAHTLIMIGSNASDRMGMGVTYLALIATFKIQPFLALGFFLRKLTSRENLLLGVGLAMAATLRLPEDIEQMANGIALGLMALKLITQFETYQLWTALVSLTCSNTIFTLTVAWRTATLILAGISLLPVCQSSSMRKTDWLPMTVAAMGVPPLPLFIFSLKDTLKRRSWPLNEGVMAVGLVSILASSLLRNDVPMAGPLVAGGLLIACYVITGTSADLTVEKAADVTWEEEAEQTGVSHNLMITVDDDGTMRIKDDETENILTVLLKTALLIVSGIFPCSIPATLLVWHTWQKQTQRSGVLWDVPSPPETQKAELEEGVYRIKQQGIFGKTQVGVGVQKEGVFHTMWHVTRGAVLTHNGKRLEPNWASVKKDLISYGGGWRLSAQWQKGEEVQVIAVEPGKNPKNFQTMPGIFQTTTGEIGAIALDFKPGTSGSPIINREGKVVGLYGNGVVTKNGGYVSGIAQTNAEPDGPTPELEEEMFKKRNLTIMDLHPGSGKTRKYLPAIVREAIKRRLRTLILAPTRVVAAEMEEALKGLPIRYQTTATKSEHTGREIVDLMCHATFTMRLLSPVRVPNYNLIIMDEAHFTDPASIAARGYISTRVGMGEAAAIFMTATPPGTADAFPQSNAPIQDEERDIPERSWNSGNEWITDFVGKTVWFVPSIKAGNDIANCLRKNGKKVIQLSRKTFDTEYQKTKLNDWDFVVTTDISEMGANFKADRVIDPRRCLKPVILTDGPERVILAGPMPVTVASAAQRRGRVGRNPQKENDQYIFMGQPLNKDEDHAHWTEAKMLLDNINTPEGIIPALFEPEREKSAAIDGEYRLKGESRKTFVELMRRGDLPVWLAHKVASEGIKYTDRKWCFDGERNNQILEENMDVEIWTKEGEKKKLRPRWLDARTYSDPLALKEFKDFAAGRKSIALDLVTEIGRVPSHLAHRTRNALDNLVMLHTSEHGGRAYRHAVEELPETMETLLLLGLMILLTGGAMLFLISGKGIGKTSIGLICVIASSGMLWMADVPLQWIASAIVLEFFMMVLLIPEPEKQRTPQDNQLAYVVIGILTLAAIVAANEMGLLETTKRDLGMSKEPGVVSPTSYLDVDLHPASAWTLYAVATTVITPMLRHTIENSTANVSLAAIANQAVVLMGLDKGWPISKMDLGVPLLALGCYSQVNPLTLIAAVLLLVTHYAIIGPGLQAKATREAQKRTAAGIMKNPTVDGIMTIDLDPVIYDSKFEKQLGQVMLLVLCAVQLLLMRTSWALCEVLTLATGPITTLWEGSPGKFWNTTIAVSMANIFRGSYLAGAGLAFSIMKSVGTGKRGTGSQGETLGEKWKKKLNQLSRKEFDLYKKSGITEVDRTEAKEGLKRGEITHHAVSRGSAKLQWFVERNMVIPEGRVIDLGCGRGGWSYYCAGLKKVTEVRGYTKGGPGHEEPVPMSTYGWNIVKLMSGKDVFYLPPEKCDTLLCDIGESSPSPTVEESRTIRVLKMVEPWLKNNQFCIKVLNPYMPTVIEHLERLQRKHGGMLVRNPLSRNSTHEMYWISNGTGNIVSSVNMVSRLLLNRFTMTHRRPTIEKDVDLGAGTRHVNAEPETPNMDVIGERIKRIKEEHSSTWHYDDENPYKTWAYHGSYEVKATGSASSMINGVVKLLTKPWDVVPMVTQMAMTDTTPFGQQRVFKEKVDTRTPRPMPGTRKVMEITAEWLWRTLGRNKRPRLCTREEFTKKVRTNAAMGAVFTEENQWDSARAAVEDEEFWKLVDRERELHKLGKCGSCVYNMMGKREKKLGEFGKAKGSRAIWYMWLGARYLEFEALGFLNEDHWFSRENSYSGVEGEGLHKLGYILRDISKIPGGAMYADDTAGWDTRITEDDLHNEEKITQQMDPEHRQLANAIFKLTYQNKVVKVQRPTPKGTVMDIISRKDQRGSGQVGTYGLNTFTNMEAQLIRQMEGEGVLSKADLENPHPLEKKITQWLETKGVERLKRMAISGDDCVVKPIDDRFANALLALNDMGKVRKDIPQWQPSKGWHDWQQVPFCSHHFHELIMKDGRKLVVPCRPQDELIGRARISQGAGWSLRETACLGKAYAQMWTLMYFHRRDLRLASNAICSAVPVHWVPTSRTTWSIHAHHQWMTTEDMLTVWNRVWIEDNPWMEDKTPITTWEDVPYLGKREDQWCGSLIGLTSRATWAQNILTAIQQVRSLIGNEEFLDYMPSMKRFRKEEESEGAIW.

Positions 1 to 15 are interaction with host EXOC1; sequence MNNQRKKTGKPSINM. The Cytoplasmic segment spans residues 1–100; it reads MNNQRKKTGK…MLSIINKRKK (100 aa). The hydrophobic; homodimerization of capsid protein C stretch occupies residues 37–72; it reads LLNGQGPMKLVMAFIAFLRFLAIPPTAGVLARWGTF. A propeptide spans 101-114 (ER anchor for the capsid protein C, removed in mature form by serine protease NS3); it reads TSLCLMMMLPATLA. The helical transmembrane segment at 101–118 threads the bilayer; it reads TSLCLMMMLPATLAFHLT. The Extracellular portion of the chain corresponds to 119-243; it reads SRDGEPRMIV…VEKVETWALR (125 aa). Residue N183 is glycosylated (N-linked (GlcNAc...) asparagine; by host). A helical transmembrane segment spans residues 244 to 264; sequence HPGFTILALFLAHYIGTSLTQ. Position 265 (K265) is a topological domain, cytoplasmic. A helical membrane pass occupies residues 266–280; that stretch reads VVIFILLMLVTPSMT. The Extracellular segment spans residues 281–723; the sequence is MRCVGVGNRD…VHQIFGSAYT (443 aa). 4 disulfides stabilise this stretch: C283–C310, C340–C401, C354–C385, and C372–C396. N347 is a glycosylation site (N-linked (GlcNAc...) asparagine; by host). Positions 378 to 391 are fusion peptide; it reads DRGWGNGCGLFGKG. An N-linked (GlcNAc...) asparagine; by host glycan is attached at N433. 2 cysteine pairs are disulfide-bonded: C463-C563 and C580-C611. The chain crosses the membrane as a helical span at residues 724-744; the sequence is ALFSGVSWIMKIGIGVLLTWI. Topologically, residues 745 to 750 are cytoplasmic; it reads GLNSKN. The helical transmembrane segment at 751-771 threads the bilayer; sequence TSMSFSCIAIGIITLYLGVVV. The Extracellular segment spans residues 772 to 1193; that stretch reads QADMGCVINW…MIGSNASDRM (422 aa). 6 disulfide bridges follow: C777/C788, C828/C916, C952/C996, C1053/C1102, C1064/C1086, and C1085/C1089. N903 and N980 each carry an N-linked (GlcNAc...) asparagine; by host glycan. N1132 and N1188 each carry an N-linked (GlcNAc...) asparagine; by host glycan. Residues 1194–1218 form a helical membrane-spanning segment; sequence GMGVTYLALIATFKIQPFLALGFFL. At 1219–1224 the chain is on the cytoplasmic side; that stretch reads RKLTSR. The helical transmembrane segment at 1225–1243 threads the bilayer; the sequence is ENLLLGVGLAMAATLRLPE. At 1244–1267 the chain is on the lumenal side; the sequence is DIEQMANGIALGLMALKLITQFET. A helical transmembrane segment spans residues 1268-1288; sequence YQLWTALVSLTCSNTIFTLTV. A topological domain (cytoplasmic) is located at residue A1289. A helical transmembrane segment spans residues 1290–1308; it reads WRTATLILAGISLLPVCQS. At 1309 to 1315 the chain is on the lumenal side; that stretch reads SSMRKTD. A helical transmembrane segment spans residues 1316 to 1336; it reads WLPMTVAAMGVPPLPLFIFSL. The Cytoplasmic portion of the chain corresponds to 1337–1344; it reads KDTLKRRS. Residues 1345–1365 form a helical membrane-spanning segment; it reads WPLNEGVMAVGLVSILASSLL. At 1366–1368 the chain is on the lumenal side; that stretch reads RND. The helical transmembrane segment at 1369 to 1389 threads the bilayer; sequence VPMAGPLVAGGLLIACYVITG. At 1390–1443 the chain is on the cytoplasmic side; that stretch reads TSADLTVEKAADVTWEEEAEQTGVSHNLMITVDDDGTMRIKDDETENILTVLLK. The interacts with and activates NS3 protease stretch occupies residues 1396–1435; that stretch reads VEKAADVTWEEEAEQTGVSHNLMITVDDDGTMRIKDDETE. Residues 1444–1464 constitute an intramembrane region (helical); the sequence is TALLIVSGIFPCSIPATLLVW. Over 1465–2146 the chain is Cytoplasmic; the sequence is HTWQKQTQRS…VEELPETMET (682 aa). A Peptidase S7 domain is found at 1474-1651; the sequence is SGVLWDVPSP…NAEPDGPTPE (178 aa). Catalysis depends on charge relay system; for serine protease NS3 activity residues H1524, D1548, and S1608. Positions 1654 to 1810 constitute a Helicase ATP-binding domain; the sequence is EEMFKKRNLT…QSNAPIQDEE (157 aa). Residues 1658-1661 form an important for RNA-binding region; sequence KKRN. 1667–1674 is an ATP binding site; sequence LHPGSGKT. The DEAH box signature appears at 1758-1761; sequence DEAH. The 166-residue stretch at 1821–1986 folds into the Helicase C-terminal domain; the sequence is GNEWITDFVG…GIIPALFEPE (166 aa). K1862 carries the post-translational modification N6-acetyllysine; by host. A helical membrane pass occupies residues 2147 to 2167; it reads LLLLGLMILLTGGAMLFLISG. The Lumenal portion of the chain corresponds to 2168–2169; that stretch reads KG. The segment at residues 2170–2190 is an intramembrane region (helical); it reads IGKTSIGLICVIASSGMLWMA. Residue D2191 is a topological domain, lumenal. A helical transmembrane segment spans residues 2192 to 2212; that stretch reads VPLQWIASAIVLEFFMMVLLI. The Cytoplasmic portion of the chain corresponds to 2213–2227; the sequence is PEPEKQRTPQDNQLA. A helical transmembrane segment spans residues 2228 to 2248; sequence YVVIGILTLAAIVAANEMGLL. At 2249–2273 the chain is on the lumenal side; the sequence is ETTKRDLGMSKEPGVVSPTSYLDVD. The helical intramembrane region spans 2274–2294; sequence LHPASAWTLYAVATTVITPML. The Lumenal portion of the chain corresponds to 2295 to 2305; sequence RHTIENSTANV. N2300 and N2304 each carry an N-linked (GlcNAc...) asparagine; by host glycan. The helical intramembrane region spans 2306–2326; it reads SLAAIANQAVVLMGLDKGWPI. Topologically, residues 2327–2346 are lumenal; sequence SKMDLGVPLLALGCYSQVNP. Residues 2347–2367 traverse the membrane as a helical segment; it reads LTLIAAVLLLVTHYAIIGPGL. At 2368–2412 the chain is on the cytoplasmic side; it reads QAKATREAQKRTAAGIMKNPTVDGIMTIDLDPVIYDSKFEKQLGQ. A helical transmembrane segment spans residues 2413–2433; that stretch reads VMLLVLCAVQLLLMRTSWALC. Topologically, residues 2434–2458 are lumenal; it reads EVLTLATGPITTLWEGSPGKFWNTT. An N-linked (GlcNAc...) asparagine; by host glycan is attached at N2456. Residues 2459–2479 form a helical membrane-spanning segment; sequence IAVSMANIFRGSYLAGAGLAF. The Cytoplasmic segment spans residues 2480–3390; that stretch reads SIMKSVGTGK…KEEESEGAIW (911 aa). Residues 2492-2753 form the mRNA cap 0-1 NS5-type MT domain; sequence TGSQGETLGE…DVDLGAGTRH (262 aa). S-adenosyl-L-methionine is bound at residue S2546. At S2546 the chain carries Phosphoserine. K2551 functions as the For 2'-O-MTase activity in the catalytic mechanism. The SUMO-interacting motif signature appears at 2567 to 2570; it reads VIDL. S-adenosyl-L-methionine contacts are provided by G2576, W2577, T2594, K2595, D2621, and V2622. D2636 serves as the catalytic For 2'-O-MTase activity. I2637 is a binding site for S-adenosyl-L-methionine. Residues K2670 and E2706 each act as for 2'-O-MTase activity in the active site. Residue Y2708 participates in S-adenosyl-L-methionine binding. Zn(2+)-binding residues include E2927, H2931, C2936, and C2939. The region spanning 3018 to 3168 is the RdRp catalytic domain; that stretch reads AMYADDTAGW…PIDDRFANAL (151 aa). The Zn(2+) site is built by H3202, C3218, and C3337.

In the N-terminal section; belongs to the class I-like SAM-binding methyltransferase superfamily. mRNA cap 0-1 NS5-type methyltransferase family. As to quaternary structure, homodimer. Interacts (via N-terminus) with host EXOC1 (via C-terminus); this interaction results in EXOC1 degradation through the proteasome degradation pathway. In terms of assembly, forms heterodimers with envelope protein E in the endoplasmic reticulum and Golgi. Homodimer; in the endoplasmic reticulum and Golgi. Interacts with protein prM. Interacts with non-structural protein 1. As to quaternary structure, homodimer; Homohexamer when secreted. Interacts with envelope protein E. In terms of assembly, interacts (via N-terminus) with serine protease NS3. Forms a heterodimer with serine protease NS3. May form homooligomers. As to quaternary structure, forms a heterodimer with NS2B. Interacts with NS4B. Interacts with unphosphorylated RNA-directed RNA polymerase NS5; this interaction stimulates RNA-directed RNA polymerase NS5 guanylyltransferase activity. In terms of assembly, interacts with host MAVS; this interaction inhibits the synthesis of IFN-beta. Interacts with host AUP1; the interaction occurs in the presence of Dengue virus NS4B and induces lipophagy which facilitates production of virus progeny particles. Interacts with serine protease NS3. As to quaternary structure, homodimer. Interacts with host STAT2; this interaction inhibits the phosphorylation of the latter, and, when all viral proteins are present (polyprotein), targets STAT2 for degradation. Interacts with serine protease NS3. Post-translationally, specific enzymatic cleavages in vivo yield mature proteins. Cleavages in the lumen of endoplasmic reticulum are performed by host signal peptidase, whereas cleavages in the cytoplasmic side are performed by serine protease NS3. Signal cleavage at the 2K-4B site requires a prior NS3 protease-mediated cleavage at the 4A-2K site. In terms of processing, cleaved in post-Golgi vesicles by a host furin, releasing the mature small envelope protein M, and peptide pr. This cleavage is incomplete as up to 30% of viral particles still carry uncleaved prM. N-glycosylated. Post-translationally, N-glycosylated. The excreted form is glycosylated and this is required for efficient secretion of the protein from infected cells. In terms of processing, acetylated by host KAT5. Acetylation modulates NS3 RNA-binding and unwinding activities and plays an important positive role for viral replication. Sumoylation of RNA-directed RNA polymerase NS5 increases NS5 protein stability allowing proper viral RNA replication. Post-translationally, phosphorylated on serines residues. This phosphorylation may trigger NS5 nuclear localization.

The protein resides in the virion. It is found in the host nucleus. The protein localises to the host cytoplasm. Its subcellular location is the host perinuclear region. It localises to the secreted. The protein resides in the virion membrane. It is found in the host endoplasmic reticulum membrane. The protein localises to the host mitochondrion. The enzyme catalyses Selective hydrolysis of -Xaa-Xaa-|-Yaa- bonds in which each of the Xaa can be either Arg or Lys and Yaa can be either Ser or Ala.. The catalysed reaction is RNA(n) + a ribonucleoside 5'-triphosphate = RNA(n+1) + diphosphate. It carries out the reaction a ribonucleoside 5'-triphosphate + H2O = a ribonucleoside 5'-diphosphate + phosphate + H(+). It catalyses the reaction ATP + H2O = ADP + phosphate + H(+). The enzyme catalyses a 5'-end (5'-triphosphoguanosine)-ribonucleoside in mRNA + S-adenosyl-L-methionine = a 5'-end (N(7)-methyl 5'-triphosphoguanosine)-ribonucleoside in mRNA + S-adenosyl-L-homocysteine. The catalysed reaction is a 5'-end (N(7)-methyl 5'-triphosphoguanosine)-ribonucleoside in mRNA + S-adenosyl-L-methionine = a 5'-end (N(7)-methyl 5'-triphosphoguanosine)-(2'-O-methyl-ribonucleoside) in mRNA + S-adenosyl-L-homocysteine + H(+). Functionally, plays a role in virus budding by binding to the cell membrane and gathering the viral RNA into a nucleocapsid that forms the core of a mature virus particle. During virus entry, may induce genome penetration into the host cytoplasm after hemifusion induced by the surface proteins. Can migrate to the cell nucleus where it modulates host functions. Overcomes the anti-viral effects of host EXOC1 by sequestering and degrading the latter through the proteasome degradation pathway. Its function is as follows. Inhibits RNA silencing by interfering with host Dicer. Prevents premature fusion activity of envelope proteins in trans-Golgi by binding to envelope protein E at pH6.0. After virion release in extracellular space, gets dissociated from E dimers. In terms of biological role, acts as a chaperone for envelope protein E during intracellular virion assembly by masking and inactivating envelope protein E fusion peptide. prM is the only viral peptide matured by host furin in the trans-Golgi network probably to avoid catastrophic activation of the viral fusion activity in acidic Golgi compartment prior to virion release. prM-E cleavage is inefficient, and many virions are only partially matured. These uncleaved prM would play a role in immune evasion. Functionally, may play a role in virus budding. Exerts cytotoxic effects by activating a mitochondrial apoptotic pathway through M ectodomain. May display a viroporin activity. Its function is as follows. Binds to host cell surface receptor and mediates fusion between viral and cellular membranes. Envelope protein is synthesized in the endoplasmic reticulum in the form of heterodimer with protein prM. They play a role in virion budding in the ER, and the newly formed immature particle is covered with 60 spikes composed of heterodimer between precursor prM and envelope protein E. The virion is transported to the Golgi apparatus where the low pH causes dissociation of PrM-E heterodimers and formation of E homodimers. prM-E cleavage is inefficient, and many virions are only partially matured. These uncleaved prM would play a role in immune evasion. Involved in immune evasion, pathogenesis and viral replication. Once cleaved off the polyprotein, is targeted to three destinations: the viral replication cycle, the plasma membrane and the extracellular compartment. Essential for viral replication. Required for formation of the replication complex and recruitment of other non-structural proteins to the ER-derived membrane structures. Excreted as a hexameric lipoparticle that plays a role against host immune response. Antagonizing the complement function. Binds to the host macrophages and dendritic cells. Inhibits signal transduction originating from Toll-like receptor 3 (TLR3). In terms of biological role, disrupts the host endothelial glycocalyx layer of host pulmonary microvascular endothelial cells, inducing degradation of sialic acid and shedding of heparan sulfate proteoglycans. NS1 induces expression of sialidases, heparanase, and activates cathepsin L, which activates heparanase via enzymatic cleavage. These effects are probably linked to the endothelial hyperpermeability observed in severe dengue disease. Functionally, component of the viral RNA replication complex that functions in virion assembly and antagonizes the host immune response. Its function is as follows. Required cofactor for the serine protease function of NS3. May have membrane-destabilizing activity and form viroporins. Displays three enzymatic activities: serine protease, NTPase and RNA helicase. NS3 serine protease, in association with NS2B, performs its autocleavage and cleaves the polyprotein at dibasic sites in the cytoplasm: C-prM, NS2A-NS2B, NS2B-NS3, NS3-NS4A, NS4A-2K and NS4B-NS5. NS3 RNA helicase binds RNA and unwinds dsRNA in the 3' to 5' direction. In terms of biological role, regulates the ATPase activity of the NS3 helicase activity. NS4A allows NS3 helicase to conserve energy during unwinding. Plays a role in the inhibition of the host innate immune response. Interacts with host MAVS and thereby prevents the interaction between RIGI and MAVS. In turn, IFN-beta production is impaired. Interacts with host AUP1 which mediates induction of lipophagy in host cells and facilitates production of virus progeny particles. Functionally, functions as a signal peptide for NS4B and is required for the interferon antagonism activity of the latter. Its function is as follows. Induces the formation of ER-derived membrane vesicles where the viral replication takes place. Inhibits interferon (IFN)-induced host STAT1 phosphorylation and nuclear translocation, thereby preventing the establishment of cellular antiviral state by blocking the IFN-alpha/beta pathway. Replicates the viral (+) and (-) RNA genome, and performs the capping of genomes in the cytoplasm. NS5 methylates viral RNA cap at guanine N-7 and ribose 2'-O positions. Besides its role in RNA genome replication, also prevents the establishment of cellular antiviral state by blocking the interferon-alpha/beta (IFN-alpha/beta) signaling pathway. Inhibits host TYK2 and STAT2 phosphorylation, thereby preventing activation of JAK-STAT signaling pathway. This is Genome polyprotein from Dengue virus type 3 (strain China/80-2/1980) (DENV-3).